The following is a 281-amino-acid chain: Putative outer membrane protein BBA52 (281 aa).

The tract at residues 162-281 (KRISDNQSKL…FFDSLEDQFI (120 aa)) is disordered. Polar residues predominate over residues 179–196 (NKSVGSKFSKNSRPSKSP). The span at 219–249 (EFLDDPSQESDELEREYQDDELESEDPDDGE) shows a compositional bias: acidic residues. Positions 250 to 262 (REYQDDRESRDDT) are enriched in basic and acidic residues. The span at 263-281 (FNEDQSEDEFFDSLEDQFI) shows a compositional bias: acidic residues.

The protein localises to the cell outer membrane. The chain is Putative outer membrane protein BBA52 from Borreliella burgdorferi (strain ATCC 35210 / DSM 4680 / CIP 102532 / B31) (Borrelia burgdorferi).